A 357-amino-acid polypeptide reads, in one-letter code: Histidine biosynthesis bifunctional protein HisB (357 aa).

The interval 1–168 is histidinol-phosphatase; that stretch reads MTPILFIDRD…GIAHALADAP (168 aa). Aspartate 8 serves as the catalytic Nucleophile. Positions 8, 10, and 128 each coordinate Mg(2+). Aspartate 10 functions as the Proton donor in the catalytic mechanism. The tract at residues 169 to 357 is imidazoleglycerol-phosphate dehydratase; sequence RIAVVQRDTK…TALPTTKGAL (189 aa).

The protein in the N-terminal section; belongs to the histidinol-phosphatase family. This sequence in the C-terminal section; belongs to the imidazoleglycerol-phosphate dehydratase family. Mg(2+) serves as cofactor.

Its subcellular location is the cytoplasm. The catalysed reaction is D-erythro-1-(imidazol-4-yl)glycerol 3-phosphate = 3-(imidazol-4-yl)-2-oxopropyl phosphate + H2O. It catalyses the reaction L-histidinol phosphate + H2O = L-histidinol + phosphate. It functions in the pathway amino-acid biosynthesis; L-histidine biosynthesis; L-histidine from 5-phospho-alpha-D-ribose 1-diphosphate: step 6/9. Its pathway is amino-acid biosynthesis; L-histidine biosynthesis; L-histidine from 5-phospho-alpha-D-ribose 1-diphosphate: step 8/9. The chain is Histidine biosynthesis bifunctional protein HisB from Stenotrophomonas maltophilia (strain R551-3).